The sequence spans 777 residues: 1,4-alpha-glucan branching enzyme GlgB (777 aa).

Residue Asp-408 is the Nucleophile of the active site. Glu-461 acts as the Proton donor in catalysis.

Belongs to the glycosyl hydrolase 13 family. GlgB subfamily. Monomer.

The catalysed reaction is Transfers a segment of a (1-&gt;4)-alpha-D-glucan chain to a primary hydroxy group in a similar glucan chain.. It participates in glycan biosynthesis; glycogen biosynthesis. Catalyzes the formation of the alpha-1,6-glucosidic linkages in glycogen by scission of a 1,4-alpha-linked oligosaccharide from growing alpha-1,4-glucan chains and the subsequent attachment of the oligosaccharide to the alpha-1,6 position. This chain is 1,4-alpha-glucan branching enzyme GlgB, found in Actinobacillus pleuropneumoniae serotype 5b (strain L20).